An 880-amino-acid polypeptide reads, in one-letter code: Interference hedgehog (880 aa).

Positions 1 to 20 (MTLLTSSLLFFSLLTSRLEA) are cleaved as a signal peptide. At 21 to 703 (IPVLEKSPAH…ETFNMSPMLT (683 aa)) the chain is on the extracellular side. 4 Ig-like C2-type domains span residues 45–142 (PGVR…IARL), 132–234 (PLVV…IQLT), 252–340 (PHLL…YIKV), and 346–432 (PQIV…LQVN). Disulfide bonds link Cys68–Cys126, Cys173–Cys220, Cys276–Cys324, and Cys367–Cys414. N-linked (GlcNAc...) asparagine glycosylation is found at Asn102 and Asn209. Positions 426–467 (GTLLQVNPKQIQEPRESGGTHRPKPNQGSKQKQMYPPTPPNV) are disordered. Fibronectin type-III domains follow at residues 461–567 (PPTP…LQPG) and 575–670 (VPEL…TQRP). Residue Asn466 is glycosylated (N-linked (GlcNAc...) asparagine). 4 residues coordinate heparin: Arg497, Lys501, Lys503, and Arg541. N-linked (GlcNAc...) asparagine glycosylation occurs at Asn557. Residues 662-697 (LKQGRTQRPKTSTTEEPTLQMGDRDTTTPSHNETFN) form a disordered region. Polar residues-rich tracts occupy residues 665-678 (GRTQ…TEEP) and 688-697 (TTPSHNETFN). N-linked (GlcNAc...) asparagine glycosylation occurs at Asn693. A helical membrane pass occupies residues 704 to 724 (GTIGGGAVLILLLISTCLCVC). Over 725–880 (RRRSSRSRGN…SSGSLNSVGV (156 aa)) the chain is Cytoplasmic. Disordered stretches follow at residues 728-762 (SSRS…QRQR) and 775-880 (QQQQ…SVGV). 2 stretches are compositionally biased toward low complexity: residues 823 to 837 (RAGG…NNNN) and 864 to 880 (SSRS…SVGV).

It belongs to the immunoglobulin superfamily. IHOG family. As to quaternary structure, homodimer. Heterotetramer; 2 iHog chains bind 2 hh chains when facilitated by heparin, heparin is required to promote high-affinity interactions between hh and iHog.

It localises to the membrane. In terms of biological role, mediates response to the active Hedgehog (Hh) protein signal in embryos, functioning upstream or at the level of patched (ptc). In Drosophila yakuba (Fruit fly), this protein is Interference hedgehog.